The primary structure comprises 307 residues: Probable RuBisCO transcriptional regulator (307 aa).

The HTH lysR-type domain maps to 5–62; it reads FTLQQLRIFKAIASEKSFTQAAEILFVSQPSLSKQIKTLENRLGILLLNRTGNKILLT. Positions 22–41 form a DNA-binding region, H-T-H motif; it reads FTQAAEILFVSQPSLSKQIK.

It belongs to the LysR transcriptional regulatory family.

It localises to the plastid. It is found in the chloroplast. Trans-acting transcriptional regulator of RuBisCO genes (rbcL and rbcS) expression. This chain is Probable RuBisCO transcriptional regulator (rbcR-A), found in Thalassiosira pseudonana (Marine diatom).